Consider the following 231-residue polypeptide: 7-cyano-7-deazaguanine synthase (231 aa).

Phenylalanine 8–leucine 18 is an ATP binding site. Residues cysteine 188, cysteine 197, cysteine 200, and cysteine 203 each contribute to the Zn(2+) site.

This sequence belongs to the QueC family. Zn(2+) serves as cofactor.

It carries out the reaction 7-carboxy-7-deazaguanine + NH4(+) + ATP = 7-cyano-7-deazaguanine + ADP + phosphate + H2O + H(+). The protein operates within purine metabolism; 7-cyano-7-deazaguanine biosynthesis. Its function is as follows. Catalyzes the ATP-dependent conversion of 7-carboxy-7-deazaguanine (CDG) to 7-cyano-7-deazaguanine (preQ(0)). This is 7-cyano-7-deazaguanine synthase from Erwinia tasmaniensis (strain DSM 17950 / CFBP 7177 / CIP 109463 / NCPPB 4357 / Et1/99).